The primary structure comprises 422 residues: Glucose-1-phosphate adenylyltransferase (422 aa).

Residues Y110, G175, 190-191 (EK), and S208 each bind alpha-D-glucose 1-phosphate.

It belongs to the bacterial/plant glucose-1-phosphate adenylyltransferase family. Homotetramer.

The enzyme catalyses alpha-D-glucose 1-phosphate + ATP + H(+) = ADP-alpha-D-glucose + diphosphate. It participates in glycan biosynthesis; glycogen biosynthesis. In terms of biological role, involved in the biosynthesis of ADP-glucose, a building block required for the elongation reactions to produce glycogen. Catalyzes the reaction between ATP and alpha-D-glucose 1-phosphate (G1P) to produce pyrophosphate and ADP-Glc. The protein is Glucose-1-phosphate adenylyltransferase of Hydrogenovibrio crunogenus (strain DSM 25203 / XCL-2) (Thiomicrospira crunogena).